The chain runs to 295 residues: Transmembrane protein 71 (295 aa).

The next 2 helical transmembrane spans lie at 229 to 249 and 253 to 273; these read LLQE…ISAC and FMGE…VAYV.

The protein belongs to the TMEM71 family.

It localises to the membrane. This is Transmembrane protein 71 (TMEM71) from Homo sapiens (Human).